Consider the following 725-residue polypeptide: Polyribonucleotide nucleotidyltransferase (725 aa).

Positions 487 and 493 each coordinate Mg(2+). Residues 554-613 (PRIETMQIPTDKIREVIGTGGKVIREIVEKTGAKIDIQDTGVVKIASSDGKAIKAAYNWI) enclose the KH domain. One can recognise an S1 motif domain in the interval 623-691 (GMIYDGTVVK…ERGKIRLSMK (69 aa)). Residues 699–725 (EDLTEKLKAEREADRNRERQARQSAGE) are disordered. Basic and acidic residues predominate over residues 701-719 (LTEKLKAEREADRNRERQA).

This sequence belongs to the polyribonucleotide nucleotidyltransferase family. Mg(2+) is required as a cofactor.

It localises to the cytoplasm. It carries out the reaction RNA(n+1) + phosphate = RNA(n) + a ribonucleoside 5'-diphosphate. Functionally, involved in mRNA degradation. Catalyzes the phosphorolysis of single-stranded polyribonucleotides processively in the 3'- to 5'-direction. The sequence is that of Polyribonucleotide nucleotidyltransferase from Methylobacterium sp. (strain 4-46).